The sequence spans 505 residues: L-carnitine/gamma-butyrobetaine antiporter (505 aa).

12 helical membrane passes run 10–30 (IEPKVFFPPLIIVGILCWLTV), 50–70 (IWGWAFEWYMVVMLFGWFWLV), 92–112 (IFMMFASCTSAAVLFWGSIEI), 143–163 (GPLPWATYSFLSVAFAYFFFV), 195–215 (FYLVALIFAMGTSLGLATPLV), 231–251 (LDAIIITCWIVLNAICVACGL), 263–283 (SYLSFLMLGWVFIVSGASFIM), 316–336 (WTVFYWAWWVIYAIQMSIFLA), 347–367 (LCFGMVLGLTASTWILWTVLG), 403–423 (FSTATMWGFFILCFIATVTLI), 446–466 (LLVRIGWSVLVGVIGIVLLAL), and 475–495 (AIIAGGCPLFFVNIMVTLSFI).

This sequence belongs to the BCCT transporter (TC 2.A.15) family. CaiT subfamily. In terms of assembly, homotrimer.

It is found in the cell inner membrane. The catalysed reaction is 4-(trimethylamino)butanoate(in) + (R)-carnitine(out) = 4-(trimethylamino)butanoate(out) + (R)-carnitine(in). It functions in the pathway amine and polyamine metabolism; carnitine metabolism. Functionally, catalyzes the exchange of L-carnitine for gamma-butyrobetaine. This chain is L-carnitine/gamma-butyrobetaine antiporter, found in Citrobacter koseri (strain ATCC BAA-895 / CDC 4225-83 / SGSC4696).